The primary structure comprises 577 residues: 2-succinyl-5-enolpyruvyl-6-hydroxy-3-cyclohexene-1-carboxylate synthase (577 aa).

The protein belongs to the TPP enzyme family. MenD subfamily. As to quaternary structure, homodimer. It depends on Mg(2+) as a cofactor. The cofactor is Mn(2+). Thiamine diphosphate is required as a cofactor.

It carries out the reaction isochorismate + 2-oxoglutarate + H(+) = 5-enolpyruvoyl-6-hydroxy-2-succinyl-cyclohex-3-ene-1-carboxylate + CO2. Its pathway is quinol/quinone metabolism; 1,4-dihydroxy-2-naphthoate biosynthesis; 1,4-dihydroxy-2-naphthoate from chorismate: step 2/7. It functions in the pathway quinol/quinone metabolism; menaquinone biosynthesis. Its function is as follows. Catalyzes the thiamine diphosphate-dependent decarboxylation of 2-oxoglutarate and the subsequent addition of the resulting succinic semialdehyde-thiamine pyrophosphate anion to isochorismate to yield 2-succinyl-5-enolpyruvyl-6-hydroxy-3-cyclohexene-1-carboxylate (SEPHCHC). This chain is 2-succinyl-5-enolpyruvyl-6-hydroxy-3-cyclohexene-1-carboxylate synthase, found in Geobacillus kaustophilus (strain HTA426).